A 382-amino-acid polypeptide reads, in one-letter code: Anhydro-N-acetylmuramic acid kinase (382 aa).

9–16 (GTSLDGID) provides a ligand contact to ATP.

The protein belongs to the anhydro-N-acetylmuramic acid kinase family.

The enzyme catalyses 1,6-anhydro-N-acetyl-beta-muramate + ATP + H2O = N-acetyl-D-muramate 6-phosphate + ADP + H(+). It participates in amino-sugar metabolism; 1,6-anhydro-N-acetylmuramate degradation. It functions in the pathway cell wall biogenesis; peptidoglycan recycling. Catalyzes the specific phosphorylation of 1,6-anhydro-N-acetylmuramic acid (anhMurNAc) with the simultaneous cleavage of the 1,6-anhydro ring, generating MurNAc-6-P. Is required for the utilization of anhMurNAc either imported from the medium or derived from its own cell wall murein, and thus plays a role in cell wall recycling. This Bacillus thuringiensis subsp. konkukian (strain 97-27) protein is Anhydro-N-acetylmuramic acid kinase.